The primary structure comprises 358 residues: Trace amine-associated receptor 7c (358 aa).

Residues 1 to 47 lie on the Extracellular side of the membrane; it reads MATDDDSFPWDQDSILSRDLLSASSLQLCYENLNRSCVRSPYSPGSR. An N-linked (GlcNAc...) asparagine glycan is attached at Asn34. 2 disulfides stabilise this stretch: Cys37–Cys201 and Cys120–Cys205. A helical membrane pass occupies residues 48–68; sequence LILYAVFGFGAVLAVCGNLLV. Topologically, residues 69–83 are cytoplasmic; the sequence is MTSILHFRQLHSPAN. Residues 84–104 form a helical membrane-spanning segment; the sequence is FLVASLACADLLVGLTVMPFS. Residues 105 to 125 lie on the Extracellular side of the membrane; sequence MVRSVEGCWYFGNTYCKFHSC. Residues 126–148 traverse the membrane as a helical segment; that stretch reads FEGSFCYSSLFHLCFISLDRYIA. The Cytoplasmic segment spans residues 149–166; that stretch reads VSDPLIYPTRFTASISGK. The chain crosses the membrane as a helical span at residues 167–187; sequence CITFSWLLSIIYSFSLLYTGA. At 188–211 the chain is on the extracellular side; that stretch reads NEAGLEDLVSALTCVGGCQVAVNQ. A helical membrane pass occupies residues 212–232; it reads SWVFINFLLFLVPALVMMTVY. Residues 233-274 lie on the Cytoplasmic side of the membrane; that stretch reads SKIFLIAKQQAQNIEKMSKQTARASESYKDRVAKRERKAAKT. The chain crosses the membrane as a helical span at residues 275–295; sequence LGIAVAAFLLSWLPYFIDSII. Residues 296 to 309 are Extracellular-facing; that stretch reads DAFLGFITPTYMYE. The chain crosses the membrane as a helical span at residues 310–332; the sequence is ILVWIVYYNSAMNPLIYAFFYPW. Residues 333 to 358 are Cytoplasmic-facing; sequence FRKAIKLIVTGKILRENSSTINLFPE.

The protein belongs to the G-protein coupled receptor 1 family.

Its subcellular location is the cell membrane. Olfactory receptor specific for N,N-dimethylalkylamines trace amines. Trace amine compounds are enriched in animal body fluids and act on trace amine-associated receptors (TAARs) to elicit both intraspecific and interspecific innate behaviors. Ligand-binding causes a conformation change that triggers signaling via G(s)-class of G alpha proteins (GNAL or GNAS). This Rattus norvegicus (Rat) protein is Trace amine-associated receptor 7c.